Here is a 376-residue protein sequence, read N- to C-terminus: Queuine tRNA-ribosyltransferase (376 aa).

The Proton acceptor role is filled by D89. Substrate-binding positions include 89–93 (DSGGF), D143, Q194, and G221. Positions 252–258 (GVGTPSN) are RNA binding. The active-site Nucleophile is D271. The tract at residues 276–280 (ARNGR) is RNA binding; important for wobble base 34 recognition. Residues C309, C311, C314, and H340 each coordinate Zn(2+).

It belongs to the queuine tRNA-ribosyltransferase family. Homodimer. Within each dimer, one monomer is responsible for RNA recognition and catalysis, while the other monomer binds to the replacement base PreQ1. Zn(2+) serves as cofactor.

It carries out the reaction 7-aminomethyl-7-carbaguanine + guanosine(34) in tRNA = 7-aminomethyl-7-carbaguanosine(34) in tRNA + guanine. It functions in the pathway tRNA modification; tRNA-queuosine biosynthesis. Its function is as follows. Catalyzes the base-exchange of a guanine (G) residue with the queuine precursor 7-aminomethyl-7-deazaguanine (PreQ1) at position 34 (anticodon wobble position) in tRNAs with GU(N) anticodons (tRNA-Asp, -Asn, -His and -Tyr). Catalysis occurs through a double-displacement mechanism. The nucleophile active site attacks the C1' of nucleotide 34 to detach the guanine base from the RNA, forming a covalent enzyme-RNA intermediate. The proton acceptor active site deprotonates the incoming PreQ1, allowing a nucleophilic attack on the C1' of the ribose to form the product. After dissociation, two additional enzymatic reactions on the tRNA convert PreQ1 to queuine (Q), resulting in the hypermodified nucleoside queuosine (7-(((4,5-cis-dihydroxy-2-cyclopenten-1-yl)amino)methyl)-7-deazaguanosine). The polypeptide is Queuine tRNA-ribosyltransferase (Clostridium acetobutylicum (strain ATCC 824 / DSM 792 / JCM 1419 / IAM 19013 / LMG 5710 / NBRC 13948 / NRRL B-527 / VKM B-1787 / 2291 / W)).